The sequence spans 385 residues: Dual-specificity RNA methyltransferase RlmN (385 aa).

The active-site Proton acceptor is E113. In terms of domain architecture, Radical SAM core spans 120-352 (VGRAGALCVS…NRAGYASPIR (233 aa)). Cysteines 127 and 363 form a disulfide. [4Fe-4S] cluster-binding residues include C134, C138, and C141. S-adenosyl-L-methionine contacts are provided by residues 189-190 (GE), S221, 243-245 (SLH), and N320. C363 (S-methylcysteine intermediate) is an active-site residue.

Belongs to the radical SAM superfamily. RlmN family. [4Fe-4S] cluster is required as a cofactor.

It localises to the cytoplasm. It carries out the reaction adenosine(2503) in 23S rRNA + 2 reduced [2Fe-2S]-[ferredoxin] + 2 S-adenosyl-L-methionine = 2-methyladenosine(2503) in 23S rRNA + 5'-deoxyadenosine + L-methionine + 2 oxidized [2Fe-2S]-[ferredoxin] + S-adenosyl-L-homocysteine. It catalyses the reaction adenosine(37) in tRNA + 2 reduced [2Fe-2S]-[ferredoxin] + 2 S-adenosyl-L-methionine = 2-methyladenosine(37) in tRNA + 5'-deoxyadenosine + L-methionine + 2 oxidized [2Fe-2S]-[ferredoxin] + S-adenosyl-L-homocysteine. Functionally, specifically methylates position 2 of adenine 2503 in 23S rRNA and position 2 of adenine 37 in tRNAs. m2A2503 modification seems to play a crucial role in the proofreading step occurring at the peptidyl transferase center and thus would serve to optimize ribosomal fidelity. This is Dual-specificity RNA methyltransferase RlmN from Phenylobacterium zucineum (strain HLK1).